We begin with the raw amino-acid sequence, 354 residues long: Peripherin-2 (354 aa).

The Cytoplasmic segment spans residues 1–24 (MALLKVKFNQKKRVKLAQGLWLMN). Residues 25 to 43 (WFSVFAGIIVFSMGLFLKI) traverse the membrane as a helical segment. Residues 44–61 (ELRKRSEVMDNSESHFVP) lie on the Lumenal side of the membrane. A helical membrane pass occupies residues 62–80 (NSLILMGILSCAFNGFAGK). Residues 81–99 (ICYDSLDPAKFAKWKPLLK) are Cytoplasmic-facing. Residues 100 to 123 (PYLALCFFFNILLFFVALICFLMR) traverse the membrane as a helical segment. Residues 124-264 (GSLESTLAQG…LHYYSSMMSS (141 aa)) lie on the Lumenal side of the membrane. Asparagine 229 carries an N-linked (GlcNAc...) asparagine glycan. A helical membrane pass occupies residues 265–290 (MGAVVLLVWLFEMSVMVGLRLLHTSL). Topologically, residues 291–354 (ESIANPEDPE…GKTPAITTVS (64 aa)) are cytoplasmic. The disordered stretch occupies residues 335-354 (GAEGAEGEEAGKTPAITTVS).

It belongs to the PRPH2/ROM1 family. Homodimer; disulfide-linked.

It localises to the membrane. Its function is as follows. May be involved in the morphogenesis of retina outer segment disks and the development and maintenance of the retina ultrastructure. The chain is Peripherin-2 (PRPH2) from Gallus gallus (Chicken).